The sequence spans 276 residues: MIIEKAKSYGFCFGVKRAVEIAEESQNAVTLGPLIHNPLEIERLAKNYNVKYVETIEDIDENVKRVIVRTHGIPKDKLQNLKEKNVEIIDATCPFVKKPQEIVEEMSKQGYDIVIFGDKNHPEIQGVMSYSVHNRVYVVLDPKELEGIRLKEHIATVAQTTRKINDYLKITNYLIQNYKEVRVFNTICNATFENQDAVRELAKKADIMIIIGGKNSSNTKQLYNIAKEFCEAYLVESEEELKKEWFEGKKHCGISAGASTPEWLVEKIISRIKELA.

Residue Cys12 coordinates [4Fe-4S] cluster. (2E)-4-hydroxy-3-methylbut-2-enyl diphosphate-binding residues include His36 and His71. Dimethylallyl diphosphate is bound by residues His36 and His71. 2 residues coordinate isopentenyl diphosphate: His36 and His71. Cys93 provides a ligand contact to [4Fe-4S] cluster. His121 contributes to the (2E)-4-hydroxy-3-methylbut-2-enyl diphosphate binding site. His121 is a binding site for dimethylallyl diphosphate. His121 contributes to the isopentenyl diphosphate binding site. Glu123 acts as the Proton donor in catalysis. Thr160 contributes to the (2E)-4-hydroxy-3-methylbut-2-enyl diphosphate binding site. [4Fe-4S] cluster is bound at residue Cys188. (2E)-4-hydroxy-3-methylbut-2-enyl diphosphate-binding residues include Ser216, Ser217, Asn218, and Ser259. Residues Ser216, Ser217, Asn218, and Ser259 each coordinate dimethylallyl diphosphate. Positions 216, 217, 218, and 259 each coordinate isopentenyl diphosphate.

The protein belongs to the IspH family. [4Fe-4S] cluster is required as a cofactor.

It carries out the reaction isopentenyl diphosphate + 2 oxidized [2Fe-2S]-[ferredoxin] + H2O = (2E)-4-hydroxy-3-methylbut-2-enyl diphosphate + 2 reduced [2Fe-2S]-[ferredoxin] + 2 H(+). It catalyses the reaction dimethylallyl diphosphate + 2 oxidized [2Fe-2S]-[ferredoxin] + H2O = (2E)-4-hydroxy-3-methylbut-2-enyl diphosphate + 2 reduced [2Fe-2S]-[ferredoxin] + 2 H(+). It functions in the pathway isoprenoid biosynthesis; dimethylallyl diphosphate biosynthesis; dimethylallyl diphosphate from (2E)-4-hydroxy-3-methylbutenyl diphosphate: step 1/1. It participates in isoprenoid biosynthesis; isopentenyl diphosphate biosynthesis via DXP pathway; isopentenyl diphosphate from 1-deoxy-D-xylulose 5-phosphate: step 6/6. In terms of biological role, catalyzes the conversion of 1-hydroxy-2-methyl-2-(E)-butenyl 4-diphosphate (HMBPP) into a mixture of isopentenyl diphosphate (IPP) and dimethylallyl diphosphate (DMAPP). Acts in the terminal step of the DOXP/MEP pathway for isoprenoid precursor biosynthesis. In Nautilia profundicola (strain ATCC BAA-1463 / DSM 18972 / AmH), this protein is 4-hydroxy-3-methylbut-2-enyl diphosphate reductase.